A 190-amino-acid chain; its full sequence is NADH-quinone oxidoreductase subunit B (190 aa).

Positions 39, 40, 104, and 135 each coordinate [4Fe-4S] cluster.

Belongs to the complex I 20 kDa subunit family. NDH-1 is composed of 14 different subunits. Subunits NuoB, C, D, E, F, and G constitute the peripheral sector of the complex. The cofactor is [4Fe-4S] cluster.

It localises to the cell inner membrane. The catalysed reaction is a quinone + NADH + 5 H(+)(in) = a quinol + NAD(+) + 4 H(+)(out). NDH-1 shuttles electrons from NADH, via FMN and iron-sulfur (Fe-S) centers, to quinones in the respiratory chain. The immediate electron acceptor for the enzyme in this species is believed to be a menaquinone. Couples the redox reaction to proton translocation (for every two electrons transferred, four hydrogen ions are translocated across the cytoplasmic membrane), and thus conserves the redox energy in a proton gradient. The polypeptide is NADH-quinone oxidoreductase subunit B (Chlorobium phaeobacteroides (strain BS1)).